A 98-amino-acid chain; its full sequence is NADH-ubiquinone oxidoreductase chain 4L (98 aa).

3 consecutive transmembrane segments (helical) span residues 1–21 (MLPI…GVLI), 29–49 (TLLC…LMIT), and 59–79 (IPLI…ALLV).

Belongs to the complex I subunit 4L family. As to quaternary structure, core subunit of respiratory chain NADH dehydrogenase (Complex I) which is composed of 45 different subunits.

The protein resides in the mitochondrion inner membrane. It catalyses the reaction a ubiquinone + NADH + 5 H(+)(in) = a ubiquinol + NAD(+) + 4 H(+)(out). Functionally, core subunit of the mitochondrial membrane respiratory chain NADH dehydrogenase (Complex I) which catalyzes electron transfer from NADH through the respiratory chain, using ubiquinone as an electron acceptor. Part of the enzyme membrane arm which is embedded in the lipid bilayer and involved in proton translocation. The protein is NADH-ubiquinone oxidoreductase chain 4L (MT-ND4L) of Phascogale tapoatafa (Common wambenger).